A 68-amino-acid polypeptide reads, in one-letter code: Conotoxin Lp5.2 (68 aa).

An N-terminal signal peptide occupies residues 1–19 (MRCVPVFIILLLLASPAAP). The propeptide occupies 20–54 (KSLETRIQNDLIRAGLTDADLKTEKGFLSGLLNVA).

Belongs to the conotoxin T superfamily. In terms of processing, contains 2 disulfide bonds that can be either 'C1-C3, C2-C4' or 'C1-C4, C2-C3', since these disulfide connectivities have been observed for conotoxins with cysteine framework V (for examples, see AC P0DQQ7 and AC P81755). Expressed by the venom duct.

The protein resides in the secreted. This chain is Conotoxin Lp5.2, found in Conus leopardus (Leopard cone).